The primary structure comprises 200 residues: Large ribosomal subunit protein uL4c (200 aa).

The segment at 45–71 (RAEIRGGGRKPWKQKGTGRARAGSRRS) is disordered. The span at 51 to 68 (GGRKPWKQKGTGRARAGS) shows a compositional bias: basic residues.

This sequence belongs to the universal ribosomal protein uL4 family. Part of the 50S ribosomal subunit.

The protein localises to the plastid. The protein resides in the chloroplast. In terms of biological role, probably binds the 23S rRNA. The sequence is that of Large ribosomal subunit protein uL4c (rpl4) from Cyanidioschyzon merolae (strain NIES-3377 / 10D) (Unicellular red alga).